Consider the following 709-residue polypeptide: Frizzled-6 (709 aa).

The first 18 residues, 1-18 (MERSPFLLACILLPLVRG), serve as a signal peptide directing secretion. Residues 19-132 (HSLFTCEPIT…CNRLPHCDDT (114 aa)) form the FZ domain. Over 19-201 (HSLFTCEPIT…SDELDFAKSF (183 aa)) the chain is Extracellular. Intrachain disulfides connect C24–C85, C32–C78, C69–C106, C95–C129, and C99–C123. Residue N38 is glycosylated (N-linked (GlcNAc...) asparagine). Residues 202 to 222 (IGIVSIFCLCATLFTFLTFLI) form a helical membrane-spanning segment. Over 223 to 233 (DVRRFRYPERP) the chain is Cytoplasmic. The helical transmembrane segment at 234-254 (IIYYSVCYSIVSLMYFVGFLL) threads the bilayer. The Extracellular portion of the chain corresponds to 255–284 (GNSTACNKADEKLELGDTVVLGSKNKACSV). N256 carries an N-linked (GlcNAc...) asparagine glycan. Residues 285–305 (VFMFLYFFTMAGTVWWVILTI) form a helical membrane-spanning segment. Topologically, residues 306–324 (TWFLAAGRKWSCEAIEQKA) are cytoplasmic. The helical transmembrane segment at 325–345 (VWFHAVAWGAPGFLTVMLLAM) threads the bilayer. Residues 346–370 (NKVEGDNISGVCFVGLYDLDASRYF) are Extracellular-facing. Residue N352 is glycosylated (N-linked (GlcNAc...) asparagine). A helical transmembrane segment spans residues 371–391 (VLLPLCLCVFVGLSLLLAGII). At 392 to 416 (SLNHVRQVIQHDGRNQEKLKKFMIR) the chain is on the cytoplasmic side. The helical transmembrane segment at 417-437 (IGVFSGLYLVPLVTLLGCYVY) threads the bilayer. Residues 438–473 (ELVNRITWEMTWFSDHCHQYRIPCPYQANPKARPEL) lie on the Extracellular side of the membrane. Residues 474-494 (ALFMIKYLMTLIVGISAVFWV) traverse the membrane as a helical segment. The Cytoplasmic portion of the chain corresponds to 495-709 (GSKKTCTEWA…EQGAGSHSDA (215 aa)). Positions 498 to 503 (KTCTEW) match the Lys-Thr-X-X-X-Trp motif, mediates interaction with the PDZ domain of Dvl family members motif. The span at 583 to 594 (QETSTEVHTSPE) shows a compositional bias: polar residues. Positions 583–709 (QETSTEVHTS…EQGAGSHSDA (127 aa)) are disordered. A compositionally biased stretch (basic and acidic residues) spans 596-616 (SVKEGRADRANTPSAKDRDCG). The span at 620–629 (GPSSKLSGNR) shows a compositional bias: polar residues. Positions 630–644 (NGRESRAGGLKERSN) are enriched in basic and acidic residues. S656 carries the phosphoserine modification. A compositionally biased stretch (polar residues) spans 669-690 (CSTSQAASSPEPTSLKGSTSLP). Residues 697–709 (ARKEQGAGSHSDA) show a composition bias toward basic and acidic residues.

This sequence belongs to the G-protein coupled receptor Fz/Smo family. In terms of assembly, interacts with LMBR1L. In terms of processing, ubiquitinated by ZNRF3, leading to its degradation by the proteasome. As to expression, expressed in both hair cells and supporting cells in the utricle, saccule, cristae and the organ of Corti in the inner ear (at protein level).

It localises to the membrane. The protein localises to the cell membrane. It is found in the cell surface. Its subcellular location is the apical cell membrane. The protein resides in the cytoplasmic vesicle membrane. It localises to the endoplasmic reticulum membrane. Its function is as follows. Receptor for Wnt proteins. Most of frizzled receptors are coupled to the beta-catenin canonical signaling pathway, which leads to the activation of disheveled proteins, inhibition of GSK-3 kinase, nuclear accumulation of beta-catenin and activation of Wnt target genes. A second signaling pathway involving PKC and calcium fluxes has been seen for some family members, but it is not yet clear if it represents a distinct pathway or if it can be integrated in the canonical pathway, as PKC seems to be required for Wnt-mediated inactivation of GSK-3 kinase. Both pathways seem to involve interactions with G-proteins. Activation by Wnt5A stimulates PKC activity via a G-protein-dependent mechanism. Involved in transduction and intercellular transmission of polarity information during tissue morphogenesis and/or in differentiated tissues. Together with FZD3, is involved in the neural tube closure and plays a role in the regulation of the establishment of planar cell polarity (PCP), particularly in the orientation of asymmetric bundles of stereocilia on the apical faces of a subset of auditory and vestibular sensory cells located in the inner ear. This Mus musculus (Mouse) protein is Frizzled-6 (Fzd6).